The sequence spans 213 residues: High frequency lysogenization protein HflD homolog (213 aa).

A coiled-coil region spans residues 79–122 (QGLNAELTRYTLSLMVLERKLSSAKGALNTLGDRINGLQRQLDH).

This sequence belongs to the HflD family.

Its subcellular location is the cytoplasm. The protein localises to the cell inner membrane. The sequence is that of High frequency lysogenization protein HflD homolog from Salmonella agona (strain SL483).